Here is a 115-residue protein sequence, read N- to C-terminus: Hydrogenase maturation factor HypA (115 aa).

A Ni(2+)-binding site is contributed by His2. 4 residues coordinate Zn(2+): Cys73, Cys76, Cys89, and Cys92.

It belongs to the HypA/HybF family.

In terms of biological role, involved in the maturation of [NiFe] hydrogenases. Required for nickel insertion into the metal center of the hydrogenase. This is Hydrogenase maturation factor HypA from Nitrosospira multiformis (strain ATCC 25196 / NCIMB 11849 / C 71).